A 478-amino-acid polypeptide reads, in one-letter code: Zinc finger C3HC-type protein 1-like (478 aa).

The C3HC-type zinc finger occupies 93–147; the sequence is CAKYGWSNIECDMLKCSSCNAYLCASLQPVLDFSKYKQRCVELQEALRKAHEKFC. The interval 285-389 is disordered; it reads LSAPNTPVSP…SSSSDTSPRG (105 aa). Polar residues predominate over residues 351 to 363; it reads SMGQGESSGLSNE. Low complexity predominate over residues 377–388; it reads LCSSSSSDTSPR.

In terms of processing, phosphorylated. May also be weakly phosphorylated on Tyr residues.

It localises to the nucleus. It is found in the nucleus envelope. Its function is as follows. Required for proper positioning of a substantial amount of TPR at the nuclear basket (NB) through interaction with TPR. In Xenopus tropicalis (Western clawed frog), this protein is Zinc finger C3HC-type protein 1-like (zc3hc1).